We begin with the raw amino-acid sequence, 234 residues long: tRNA (guanine-N(1)-)-methyltransferase (234 aa).

Glycine 113 contributes to the S-adenosyl-L-methionine binding site.

It belongs to the RNA methyltransferase TrmD family. Homodimer.

It localises to the cytoplasm. The enzyme catalyses guanosine(37) in tRNA + S-adenosyl-L-methionine = N(1)-methylguanosine(37) in tRNA + S-adenosyl-L-homocysteine + H(+). Specifically methylates guanosine-37 in various tRNAs. This is tRNA (guanine-N(1)-)-methyltransferase from Gluconobacter oxydans (strain 621H) (Gluconobacter suboxydans).